We begin with the raw amino-acid sequence, 784 residues long: MPNIEKYEIFLDFNGNEYEGVEKIYLNSEEEKLELDSVNLEIRSVKSDGKDTKFELKGEKLVIYGKIERELEIKFKGKASRDSILGIYVAPYDGKGMITTQFEAVYARRFIPCFDHPAMKARFKLSVRVQKGLKVISNMPVERIEEDVDGKVIYRFQETPKMSTYLLYLGIDEFEEISDNSKQPTVILATVPGKSKRGLFAINVARKVIEFYEKYFEIPYQLPKVHLIQVPEFAAGAMENWGAITFRETALLADDSSSISQKFRVAEVVAHELAHQWFGNLVTLKWWDDLWLNESFATFMSYKSIKHLFPQWDSEGHLIYDESIGALEDDSLSTTHPIEAHVKDPHEIEQMFDNISYGKGASILKMIEAYVGEENFRRGVVNYLNSFKFGNAEGKDLWNSISNAAGQSIGEIMADWITKPGYPVIFVNAYGNSIRFSQKRFTLLDSGLNEVYKVPITYEINDKFGTLLLDKESAEIRLDEGLKSIKVNINRTGFYRVLYDSLNLAFSSKLNAYEELGLVNDYWNFLLADLIDAKTYFGVIGRFVYTSNSFVSREITSQLLTLYYLFKKNYGKDFLVNQVKIFRKANDDLGKLAYSTVISALARMDEEFALGLSTLFDQYENIDSNIKEAVAIAYAVTNNDFNTLLEKYKRYTIDEEKNRILSAISSLRDPSIVVKVFSLIFERNIKAQDTRFVISSLLHNPHIREEVCSYLMNNFEEVKKFVNTVYGGPWGLGSIVRSMSFCGVDKPKDIIDFLEKVKFKEIERPIKESEERIKVYSRLKQNLP.

Substrate contacts are provided by residues glutamate 103 and 236–240; that span reads GAMEN. Position 271 (histidine 271) interacts with Zn(2+). Glutamate 272 serves as the catalytic Proton acceptor. Histidine 275 and glutamate 294 together coordinate Zn(2+).

It belongs to the peptidase M1 family. The cofactor is Zn(2+).

The protein localises to the cytoplasm. In Saccharolobus solfataricus (strain ATCC 35092 / DSM 1617 / JCM 11322 / P2) (Sulfolobus solfataricus), this protein is Probable aminopeptidase 1 (ape1).